The primary structure comprises 1296 residues: Probable serine/threonine protein kinase IREH1 (1296 aa).

Disordered regions lie at residues 1 to 274 (MVFK…SESP), 457 to 480 (SGAG…QEQH), and 524 to 553 (SPAL…VGSR). Positions 10–32 (SSKKSGSSSPDSSNSPRSVGSNS) are enriched in low complexity. Position 32 is a phosphoserine (serine 32). Basic and acidic residues-rich tracts occupy residues 68–77 (DGLKKKDGSS), 101–112 (EVKKPPPPEVKE), and 178–208 (RKKE…RDSL). Residues 214 to 249 (PPRSLSPTLPPSGSRLQNVASSSGTGRSEMSSGRSG) are compositionally biased toward low complexity. The C2H2-type; atypical zinc-finger motif lies at 602–621 (CRICEEEVPTTHVEDHSRVC). The tract at residues 724–750 (FGPKSDQGMTTSSASSMTPRSPIPTPR) is disordered. The span at 730 to 740 (QGMTTSSASSM) shows a compositional bias: polar residues. One can recognise a Protein kinase domain in the interval 882-1171 (FEIIKPISRG…AAEVKQHIFF (290 aa)). Residues 888–896 (ISRGAFGRV) and lysine 911 each bind ATP. The Proton acceptor role is filled by aspartate 1005. Serine 1070 bears the Phosphoserine mark. Residues 1172–1277 (KDINWDTLAR…KNLSQLASIN (106 aa)) form the AGC-kinase C-terminal domain. Residues 1214–1245 (PSGEVPDYSDADSMTNSSGCSSNHHEEGEAEE) form a disordered region. Over residues 1225–1235 (DSMTNSSGCSS) the composition is skewed to polar residues. Positions 1236-1245 (NHHEEGEAEE) are enriched in basic and acidic residues.

The protein belongs to the protein kinase superfamily. AGC Ser/Thr protein kinase family.

It carries out the reaction L-seryl-[protein] + ATP = O-phospho-L-seryl-[protein] + ADP + H(+). It catalyses the reaction L-threonyl-[protein] + ATP = O-phospho-L-threonyl-[protein] + ADP + H(+). Functionally, may be involved in root hair elongation. The protein is Probable serine/threonine protein kinase IREH1 of Arabidopsis thaliana (Mouse-ear cress).